The primary structure comprises 142 residues: Large ribosomal subunit protein uL11 (142 aa).

This sequence belongs to the universal ribosomal protein uL11 family. Part of the ribosomal stalk of the 50S ribosomal subunit. Interacts with L10 and the large rRNA to form the base of the stalk. L10 forms an elongated spine to which L12 dimers bind in a sequential fashion forming a multimeric L10(L12)X complex. Post-translationally, one or more lysine residues are methylated.

Forms part of the ribosomal stalk which helps the ribosome interact with GTP-bound translation factors. This is Large ribosomal subunit protein uL11 from Rhodopseudomonas palustris (strain BisA53).